Reading from the N-terminus, the 221-residue chain is PKHD-type hydroxylase P9303_20491 (221 aa).

The Fe2OG dioxygenase domain occupies 80–174; it reads HIHGVMFSRS…RLVCVGWIQS (95 aa). The Fe cation site is built by histidine 98, aspartate 100, and histidine 155. Residue arginine 165 participates in 2-oxoglutarate binding.

Fe(2+) is required as a cofactor. It depends on L-ascorbate as a cofactor.

The protein is PKHD-type hydroxylase P9303_20491 of Prochlorococcus marinus (strain MIT 9303).